Here is a 413-residue protein sequence, read N- to C-terminus: Peptidase T (413 aa).

Histidine 81 lines the Zn(2+) pocket. Aspartate 83 is an active-site residue. A Zn(2+)-binding site is contributed by aspartate 143. Glutamate 178 (proton acceptor) is an active-site residue. Zn(2+)-binding residues include glutamate 179, aspartate 201, and histidine 383.

Belongs to the peptidase M20B family. Requires Zn(2+) as cofactor.

It is found in the cytoplasm. The enzyme catalyses Release of the N-terminal residue from a tripeptide.. Cleaves the N-terminal amino acid of tripeptides. This is Peptidase T from Lactococcus lactis subsp. hordniae.